A 385-amino-acid chain; its full sequence is HAT1-interacting factor 1 (385 aa).

An important for interaction with heterotetrameric histone H3 and H4 and for interaction with dimeric histone H2A and H2B region spans residues 80–199 (GNLFGDALLA…RKSGFHIYFE (120 aa)). Composition is skewed to low complexity over residues 85–97 (DALL…SGSE) and 105–116 (DVSNGEEGNENG). Residues 85 to 163 (DALLAGDDGS…EEENVEKEEE (79 aa)) form a disordered region. The segment covering 129 to 160 (DQEEEDLTGDVDSGDSEDSGEGSEEEEENVEK) has biased composition (acidic residues). At Ser174 the chain carries Phosphoserine. TPR repeat units follow at residues 186–220 (VSQL…LGRP), 229–262 (ENSR…YLKA), and 289–322 (ALRW…RPKD). The interaction with dimeric histone H2A and H2B stretch occupies residues 248 to 332 (EAEMFSRAIH…SELQQARLAQ (85 aa)). Positions 340–385 (VQENQQHGSKRPLSQPTTSIGFPALEKPLGDFNDLSQLVKKKPRRH) are disordered. Residues 342 to 359 (ENQQHGSKRPLSQPTTSI) are compositionally biased toward polar residues.

This sequence belongs to the NASP family. In terms of assembly, homodimer. The homodimer interacts with a histone tetramer containing H3 and H4; the interaction is direct. The homodimer interacts with heterodimeric histone H2A and H2B; the interaction is direct. Component of the nuclear histone acetyltransferase B (HAT-B) complex composed of at least HAT1, HAT2 and HIF1. Does not interact with HAT1 in the absence of HAT2. Interacts with histones H3 and H4 in a HAT1/HAT2 dependent manner. Interaction with heterotetrameric histone H3 and H4 precludes interaction with dimeric histone H2A and H2B, irrespective of the fact that their binding involves non-identical regions of the protein.

The protein resides in the nucleus. In terms of biological role, histone H3 and H4 specific chaperone component of the nuclear histone acetyltransferase B (HAT-B) complex. Involved in chromatin assembly and telomere silencing. The polypeptide is HAT1-interacting factor 1 (HIF1) (Saccharomyces cerevisiae (strain ATCC 204508 / S288c) (Baker's yeast)).